The chain runs to 466 residues: Glutamate-1-semialdehyde 2,1-aminomutase (466 aa).

N6-(pyridoxal phosphate)lysine is present on Lys-292.

The protein belongs to the class-III pyridoxal-phosphate-dependent aminotransferase family. HemL subfamily. In terms of assembly, homodimer. It depends on pyridoxal 5'-phosphate as a cofactor.

Its subcellular location is the cytoplasm. It catalyses the reaction (S)-4-amino-5-oxopentanoate = 5-aminolevulinate. The protein operates within porphyrin-containing compound metabolism; protoporphyrin-IX biosynthesis; 5-aminolevulinate from L-glutamyl-tRNA(Glu): step 2/2. The protein is Glutamate-1-semialdehyde 2,1-aminomutase of Tropheryma whipplei (strain TW08/27) (Whipple's bacillus).